The chain runs to 236 residues: 2,3,4,5-tetrahydropyridine-2,6-dicarboxylate N-acetyltransferase (236 aa).

The protein belongs to the transferase hexapeptide repeat family. DapH subfamily.

The enzyme catalyses (S)-2,3,4,5-tetrahydrodipicolinate + acetyl-CoA + H2O = L-2-acetamido-6-oxoheptanedioate + CoA. The protein operates within amino-acid biosynthesis; L-lysine biosynthesis via DAP pathway; LL-2,6-diaminopimelate from (S)-tetrahydrodipicolinate (acetylase route): step 1/3. Its function is as follows. Catalyzes the transfer of an acetyl group from acetyl-CoA to tetrahydrodipicolinate. This chain is 2,3,4,5-tetrahydropyridine-2,6-dicarboxylate N-acetyltransferase, found in Oceanobacillus iheyensis (strain DSM 14371 / CIP 107618 / JCM 11309 / KCTC 3954 / HTE831).